Here is a 185-residue protein sequence, read N- to C-terminus: Ribosome-recycling factor (185 aa).

The protein belongs to the RRF family.

It is found in the cytoplasm. In terms of biological role, responsible for the release of ribosomes from messenger RNA at the termination of protein biosynthesis. May increase the efficiency of translation by recycling ribosomes from one round of translation to another. The polypeptide is Ribosome-recycling factor (Dehalococcoides mccartyi (strain CBDB1)).